Consider the following 1118-residue polypeptide: uncharacterized protein (1118 aa).

3 disordered regions span residues 1–69 (MESG…NGED), 1044–1071 (PKSVSSSSSLGRKRGRKRENSEEEEKID), and 1090–1118 (IRPTVNVEEDQNIKTEIEDSDDLEDSFEL). Residues 13 to 34 (DMVEEDNDEDSFEEPACEDSFD) show a composition bias toward acidic residues. Residues 35–60 (SQEASSKANEPQNDSFDEPIQSSVSK) show a composition bias toward polar residues. The segment covering 1107-1118 (EDSDDLEDSFEL) has biased composition (acidic residues).

This is an uncharacterized protein from Caenorhabditis elegans.